The following is a 361-amino-acid chain: tRNA/tmRNA (uracil-C(5))-methyltransferase (361 aa).

Q185, Y213, N218, E234, and D294 together coordinate S-adenosyl-L-methionine. C319 (nucleophile) is an active-site residue. The active-site Proton acceptor is E353.

Belongs to the class I-like SAM-binding methyltransferase superfamily. RNA M5U methyltransferase family. TrmA subfamily.

The enzyme catalyses uridine(54) in tRNA + S-adenosyl-L-methionine = 5-methyluridine(54) in tRNA + S-adenosyl-L-homocysteine + H(+). It catalyses the reaction uridine(341) in tmRNA + S-adenosyl-L-methionine = 5-methyluridine(341) in tmRNA + S-adenosyl-L-homocysteine + H(+). Its function is as follows. Dual-specificity methyltransferase that catalyzes the formation of 5-methyluridine at position 54 (m5U54) in all tRNAs, and that of position 341 (m5U341) in tmRNA (transfer-mRNA). The protein is tRNA/tmRNA (uracil-C(5))-methyltransferase of Pseudomonas syringae pv. syringae (strain B728a).